A 330-amino-acid chain; its full sequence is tRNA pseudouridine synthase B (330 aa).

The active-site Nucleophile is the D42.

This sequence belongs to the pseudouridine synthase TruB family. Type 1 subfamily.

The enzyme catalyses uridine(55) in tRNA = pseudouridine(55) in tRNA. Functionally, responsible for synthesis of pseudouridine from uracil-55 in the psi GC loop of transfer RNAs. This is tRNA pseudouridine synthase B from Lactococcus lactis subsp. cremoris (strain SK11).